We begin with the raw amino-acid sequence, 242 residues long: MSQAPKIAMVLAAGLGTRMRPLTNDRPKALVEVAGKALIDHMLDRLVAASVETAVVNVHYFADLVEAHLRAREAKGLAPRIVISDERVQALETGGGIKHALALLGEGPVFVANIDSIWIEHAGAAVDAVAAAWDPERMDVCLMLASTTESLGFHDTGDVFLSADGLVRFKDAGEIAPLVYVGVHICKPEITADGPDGPFSLLPLWKRLAADGRVCGVAPEGLWMHVGDPQAKLAAEARLAEA.

Residues 16–18 and Lys-28 contribute to the UTP site; that span reads GTR. Asn-113 provides a ligand contact to substrate. Asp-115 lines the Mg(2+) pocket. Residue Asp-158 participates in substrate binding.

It belongs to the nucleotidyltransferase MurU family. In terms of assembly, monomer. Requires Mg(2+) as cofactor.

The enzyme catalyses N-acetyl-alpha-D-muramate 1-phosphate + UDP + H(+) = UDP-N-acetyl-alpha-D-muramate + phosphate. The protein operates within cell wall biogenesis; peptidoglycan recycling. Functionally, catalyzes the formation of UDP-N-acetylmuramate (UDP-MurNAc), a crucial precursor of the bacterial peptidoglycan cell wall, from UTP and MurNAc-alpha-1P. Is likely involved in peptidoglycan recycling as part of a cell wall recycling pathway that bypasses de novo biosynthesis of the peptidoglycan precursor UDP-MurNAc. Is able to complement the fosfomycin sensitivity phenotype of a P.putida mutant lacking murU. This chain is N-acetylmuramate alpha-1-phosphate uridylyltransferase, found in Caulobacter vibrioides (strain ATCC 19089 / CIP 103742 / CB 15) (Caulobacter crescentus).